Consider the following 498-residue polypeptide: Probable cytosol aminopeptidase (498 aa).

Mn(2+)-binding residues include Lys-269 and Asp-274. Residue Lys-281 is part of the active site. 3 residues coordinate Mn(2+): Asp-292, Asp-351, and Glu-353. Arg-355 is an active-site residue.

This sequence belongs to the peptidase M17 family. Requires Mn(2+) as cofactor.

It localises to the cytoplasm. The enzyme catalyses Release of an N-terminal amino acid, Xaa-|-Yaa-, in which Xaa is preferably Leu, but may be other amino acids including Pro although not Arg or Lys, and Yaa may be Pro. Amino acid amides and methyl esters are also readily hydrolyzed, but rates on arylamides are exceedingly low.. The catalysed reaction is Release of an N-terminal amino acid, preferentially leucine, but not glutamic or aspartic acids.. In terms of biological role, presumably involved in the processing and regular turnover of intracellular proteins. Catalyzes the removal of unsubstituted N-terminal amino acids from various peptides. This is Probable cytosol aminopeptidase from Glaesserella parasuis serovar 5 (strain SH0165) (Haemophilus parasuis).